A 114-amino-acid polypeptide reads, in one-letter code: PDZK1-interacting protein 1 (114 aa).

At 1–28 the chain is on the extracellular side; sequence MSAFGLLILGLLTAVPPASCRQGLGNLQ. The chain crosses the membrane as a helical span at residues 29 to 51; sequence PWMQGLIAVAVFLVLVAIAFAVN. Over 52 to 114 the chain is Cytoplasmic; the sequence is HFWCQEEPEP…EEGKVRSTPM (63 aa). A Phosphoserine modification is found at Ser85. Residues 95 to 114 form a disordered region; the sequence is HENAYENVPEEEGKVRSTPM. Over residues 105–114 the composition is skewed to basic and acidic residues; sequence EEGKVRSTPM.

It belongs to the PDZK1-interacting protein 1/SMIM24 family. Forms a heterodimer (via N-terminal transmembrane helix) with SLC5A2/SGLT2 (via TM13); this interaction enhances SLC5A2 transporter activity. Interacts with PDZK1.

It localises to the apical cell membrane. Its function is as follows. Auxiliary protein of electrogenic Na(+)-coupled sugar symporter SLC5A2/SGLT2 and SLC5A1/SGLT1. Essential for the transporter activity of SLC5A2/SGLT2 but not SLC5A1/SGLT1. The polypeptide is PDZK1-interacting protein 1 (Pongo abelii (Sumatran orangutan)).